A 125-amino-acid chain; its full sequence is UPF0734 protein DDB_G0273871/DDB_G0273177 (125 aa).

Belongs to the UPF0734 family.

In Dictyostelium discoideum (Social amoeba), this protein is UPF0734 protein DDB_G0273871/DDB_G0273177.